Consider the following 414-residue polypeptide: Seminal vesicle secretory protein 2 (414 aa).

An N-terminal signal peptide occupies residues 1 to 22 (MKSSVFILSLFLLLERQAAVVG). Gln23 carries the pyrrolidone carboxylic acid modification. 13 tandem repeats follow at residues 108–120 (ESQI…VKSS), 127–139 (GSQL…VKSS), 140–152 (ESQL…VKAS), 153–165 (GSQL…VKAS), 166–178 (GSQL…MKSS), 179–191 (GSQV…MKSS), 192–204 (GSQV…MKAS), 205–217 (ESQI…RKSQ), 224–236 (YGQM…TKSL), 237–249 (ESQA…VKSQ), 257–269 (YGQR…ETQL), 275–287 (DAQL…QKSQ), and 299–311 (SAQL…QKSL). Residues 108 to 311 (ESQIKSFRQV…LKSFGQQKSL (204 aa)) form a 13 X 13 AA tandem repeats region. 3 disordered regions span residues 170-228 (KSYG…GQMK), 240-294 (AKSF…SFSQ), and 306-369 (GQQK…FGQE). The span at 240–259 (AKSFGQVKSQSGQMKSSYGQ) shows a compositional bias: polar residues. Over residues 277–294 (QLKSYGQQKSQKQSSFSQ) the composition is skewed to low complexity. Polar residues-rich tracts occupy residues 306–321 (GQQK…TQQK) and 342–351 (SVQQKSTQQM). A compositionally biased stretch (low complexity) spans 358 to 369 (SQFGQQRQFGQE).

The repeating unit appears to be involved in the formation of the copulatory plug via a transglutaminase reaction cross-linking glutamine and lysine residues.

Its function is as follows. The rat seminal vesicle contains six major androgen-dependent secretory proteins referred to as SVS I-VI. The SVS I-III proteins appear to be components of the rat copulatory plug, with the SVS II protein being the major component. This is Seminal vesicle secretory protein 2 (Svs2) from Rattus norvegicus (Rat).